Reading from the N-terminus, the 944-residue chain is Spindle pole body component 110 (944 aa).

Phosphothreonine is present on threonine 18. The disordered stretch occupies residues 23 to 110 (IKSKRNTTQT…RKRNLIDDLK (88 aa)). Positions 28-46 (NTTQTQVVSPTKVPNANNG) are enriched in polar residues. Positions 54-59 (KKRQRR) match the Nuclear localization signal motif. Position 60 is a phosphoserine; by MPS1 (serine 60). Phosphothreonine; by MPS1 is present on residues threonine 64 and threonine 68. The span at 67-78 (STRLFSEASQFD) shows a compositional bias: polar residues. Serine 80 is modified (phosphoserine). Basic and acidic residues predominate over residues 96-110 (NVDKSRKRNLIDDLK). The stretch at 164 to 791 (EIKSLKHEIK…NRRLEERLIL (628 aa)) forms a coiled coil. Residue serine 529 is modified to Phosphoserine. 2 consecutive short sequence motifs (nuclear localization signal) follow at residues 726–731 (KEKYKR) and 742–747 (RLRREK). Residues 900–927 (SFKTVALLVLACVRMKRIAFYRRSDDNR) are calmodulin-binding.

The protein belongs to the SPC110 family. In terms of assembly, homodimer. Component of the SPC110 complex containing at least CMD1, SPC29 and SCP110. Interacts with SPC97 and SPC98.

It is found in the nucleus. Its subcellular location is the cytoplasm. The protein resides in the cytoskeleton. The protein localises to the microtubule organizing center. It localises to the spindle pole body. In terms of biological role, component of the spindle pole body (SPB) required for the proper execution of spindle pole body (SPB) duplication. Potential role in cross-linking filaments or anchoring other molecules. It is essential for growth. The chain is Spindle pole body component 110 (SPC110) from Saccharomyces cerevisiae (strain ATCC 204508 / S288c) (Baker's yeast).